The primary structure comprises 642 residues: Fimbrin (642 aa).

2 EF-hand domains span residues 16–50 (EDLFSTIEKFRAIDLDDKGWVEKQQALEAVSKDGD) and 51–86 (ATYDEARETLKHVGVDASGRVELDDYVGLVAKLRES). The Ca(2+) site is built by Asp29, Asp31, Trp35, Asp66, Ser68, Arg70, and Asp75. 2 actin-binding regions span residues 125-394 (IVAG…GLEP) and 395-642 (IQEE…TLNK). 4 consecutive Calponin-homology (CH) domains span residues 139–259 (EEER…RRGL), 287–390 (LPPE…NTHP), 411–521 (EREA…RRNI), and 534–642 (DMSD…TLNK).

Its function is as follows. Binds to actin, and functionally associates with actin structures involved in the development and maintenance of cell polarity. The polypeptide is Fimbrin (SAC6) (Saccharomyces cerevisiae (strain ATCC 204508 / S288c) (Baker's yeast)).